A 273-amino-acid chain; its full sequence is Large ribosomal subunit protein uL2cz/uL2cy (273 aa).

2 disordered regions span residues 1–25 (MAKHLYKTPIPSTRKGTLDRQVKSN) and 225–253 (PVDHPHGGGEGKAPIGRKKPTTPWGYPAL).

This sequence belongs to the universal ribosomal protein uL2 family. Part of the 50S ribosomal subunit.

It localises to the plastid. It is found in the chloroplast. The protein is Large ribosomal subunit protein uL2cz/uL2cy (rpl2-A) of Triticum aestivum (Wheat).